The chain runs to 626 residues: Leucine aminopeptidase 2-1 (626 aa).

Residues 134–136 and 259–264 contribute to the substrate site; these read QCQ and PYGGME. His-288 is a binding site for Zn(2+). Residue Glu-289 is the Proton acceptor of the active site. Zn(2+)-binding residues include His-292 and Glu-311. Residue Tyr-389 is the Proton donor of the active site.

Belongs to the peptidase M1 family. The cofactor is Zn(2+).

Its subcellular location is the cytoplasm. The protein resides in the nucleus. It catalyses the reaction an epoxide + H2O = an ethanediol. Aminopeptidase that preferentially cleaves di- and tripeptides. Also has low epoxide hydrolase activity (in vitro). Can hydrolyze the epoxide leukotriene LTA(4) but it forms preferentially 5,6-dihydroxy-7,9,11,14-eicosatetraenoic acid rather than the cytokine leukotriene B(4) as the product compared to the homologous mammalian enzyme (in vitro). The chain is Leucine aminopeptidase 2-1 (LKA4) from Scheffersomyces stipitis (strain ATCC 58785 / CBS 6054 / NBRC 10063 / NRRL Y-11545) (Yeast).